The following is a 394-amino-acid chain: Putative agmatinase 1 (394 aa).

The first 20 residues, 1–20, serve as a signal peptide directing secretion; the sequence is MALQSLFLILLAGAAQLAQA. Mn(2+)-binding residues include His186, Asp209, His211, Asp213, Asp307, and Asp309.

This sequence belongs to the arginase family. The cofactor is Mn(2+).

It carries out the reaction agmatine + H2O = urea + putrescine. This chain is Putative agmatinase 1, found in Schizosaccharomyces pombe (strain 972 / ATCC 24843) (Fission yeast).